A 607-amino-acid polypeptide reads, in one-letter code: Discoidin-inducing complex subunit B (607 aa).

A signal peptide spans 1–19 (MNKKIIILIYLIFIKSIVG). At 20 to 554 (QNPVWIGGSG…LGTDGISKGS (535 aa)) the chain is on the extracellular side. N-linked (GlcNAc...) asparagine glycosylation is found at N75, N161, N215, N276, N277, N307, N324, N453, N477, and N527. Residues 555-575 (LAGISVSMVALACFVSLGVWW) traverse the membrane as a helical segment. Over 576–607 (KTSKKNDQRNDSQVLTNFSQNKSDDIDVERKL) the chain is Cytoplasmic.

Forms a complex with psiF/dicA.

It localises to the membrane. It is found in the secreted. Component of a complex that acts as a quorum sensing protein regulating discoidin gene expression during growth and development. Its function in the complex is unclear as it has no ability to induce discoidin during growth and development by itself. This is Discoidin-inducing complex subunit B (dicB) from Dictyostelium discoideum (Social amoeba).